A 252-amino-acid polypeptide reads, in one-letter code: Sulfate transporter CysZ (252 aa).

5 helical membrane-spanning segments follow: residues 29-49 (FVLL…FYIF), 66-86 (FLSW…LATF), 141-160 (LVYI…IPAL), 164-186 (VAPF…DYPF), and 212-232 (ALVS…PVAV).

Belongs to the CysZ family.

Its subcellular location is the cell inner membrane. Functionally, high affinity, high specificity proton-dependent sulfate transporter, which mediates sulfate uptake. Provides the sulfur source for the cysteine synthesis pathway. This is Sulfate transporter CysZ from Vibrio atlanticus (strain LGP32) (Vibrio splendidus (strain Mel32)).